The chain runs to 357 residues: Dehydrogenase FUB6 (357 aa).

Polar residues predominate over residues 1–17 (MGGEVSNKTWVFKQSPS). A disordered region spans residues 1–22 (MGGEVSNKTWVFKQSPSGLPEP).

Belongs to the zinc-containing alcohol dehydrogenase family. Quinone oxidoreductase subfamily.

It functions in the pathway mycotoxin biosynthesis. Functionally, dehydrogenase; part of the gene cluster that mediates the biosynthesis of fusaric acid, a mycotoxin with low to moderate toxicity to animals and humans, but with high phytotoxic properties. L-aspartate is suggested as fusaric acid amino acid precursor that is activated and further processed to O-acetyl-L-homoserine by cluster enzymes aspartate kinase FUB3 and homoserine O-acetyltransferase FUB5, as well as enzymes of the primary metabolism. The polyketide synthase (PKS) FUB1 generates the triketide trans-2-hexenal which is presumptively released by the hydrolase FUB4 and linked to the NRPS-bound amino acid precursor by NAD(P)-dependent dehydrogenase FUB6. FUB1, FUB4, and the non-canonical NRPS Fub8 may form an enzyme complex. Further processing of the NRPS-bound intermediate might be carried out by FUB6 and the O-acetylhomoserine FUB7, enabling a spontaneous electrocyclization to close the carbon backbone of fusaric acid. Dihydrofusaric acid is likely to be released via reduction by the thioester reductase (TR) domain of FUB8 whereupon the final oxidation to fusaric acid may (also) be performed by the FMN-dependent dehydrogenase FUB9. This Fusarium oxysporum f. sp. lycopersici (strain 4287 / CBS 123668 / FGSC 9935 / NRRL 34936) (Fusarium vascular wilt of tomato) protein is Dehydrogenase FUB6.